We begin with the raw amino-acid sequence, 317 residues long: Cytochrome c biogenesis protein CcsA (317 aa).

8 helical membrane passes run 9-29 (ILTHISFSVVSIGITIYLITF), 46-63 (TATAFCLTGLLITRWVYS), 71-91 (LYESLIFLSWSLSIIHKIFDF), 98-118 (LSAITAPSAFFTQGFATSGFL), 143-163 (MVLGYAALLCGSLLSTALLVI), 225-245 (IISLGFIFLTTGILSGAVWAN), 258-273 (ETWAFITWTIFGIYLH), and 286-306 (AIVASMGFLIIWICYFGVNLL).

This sequence belongs to the CcmF/CycK/Ccl1/NrfE/CcsA family. As to quaternary structure, may interact with Ccs1.

The protein resides in the plastid. It localises to the chloroplast thylakoid membrane. Required during biogenesis of c-type cytochromes (cytochrome c6 and cytochrome f) at the step of heme attachment. This chain is Cytochrome c biogenesis protein CcsA, found in Citrus sinensis (Sweet orange).